A 195-amino-acid polypeptide reads, in one-letter code: Putative NADH dehydrogenase/NAD(P)H nitroreductase CC_0061 (195 aa).

Belongs to the nitroreductase family. HadB/RutE subfamily. FMN is required as a cofactor.

The protein is Putative NADH dehydrogenase/NAD(P)H nitroreductase CC_0061 of Caulobacter vibrioides (strain ATCC 19089 / CIP 103742 / CB 15) (Caulobacter crescentus).